The chain runs to 109 residues: Large ribosomal subunit protein uL22 (109 aa).

Belongs to the universal ribosomal protein uL22 family. In terms of assembly, part of the 50S ribosomal subunit.

In terms of biological role, this protein binds specifically to 23S rRNA; its binding is stimulated by other ribosomal proteins, e.g. L4, L17, and L20. It is important during the early stages of 50S assembly. It makes multiple contacts with different domains of the 23S rRNA in the assembled 50S subunit and ribosome. Functionally, the globular domain of the protein is located near the polypeptide exit tunnel on the outside of the subunit, while an extended beta-hairpin is found that lines the wall of the exit tunnel in the center of the 70S ribosome. This Chromobacterium violaceum (strain ATCC 12472 / DSM 30191 / JCM 1249 / CCUG 213 / NBRC 12614 / NCIMB 9131 / NCTC 9757 / MK) protein is Large ribosomal subunit protein uL22.